A 43-amino-acid polypeptide reads, in one-letter code: Protein PsbN (43 aa).

The helical transmembrane segment at 4 to 24 (ATIIVIFVSSLLVGITAYSVY) threads the bilayer.

Belongs to the PsbN family.

Its subcellular location is the plastid. It is found in the chloroplast thylakoid membrane. Its function is as follows. May play a role in photosystem I and II biogenesis. This chain is Protein PsbN, found in Thalassiosira pseudonana (Marine diatom).